Here is a 250-residue protein sequence, read N- to C-terminus: Glucosamine-6-phosphate deaminase (250 aa).

The active-site Proton acceptor; for enolization step is aspartate 67. Asparagine 136 functions as the For ring-opening step in the catalytic mechanism. Residue histidine 138 is the Proton acceptor; for ring-opening step of the active site. Glutamate 143 acts as the For ring-opening step in catalysis.

It belongs to the glucosamine/galactosamine-6-phosphate isomerase family. NagB subfamily.

It catalyses the reaction alpha-D-glucosamine 6-phosphate + H2O = beta-D-fructose 6-phosphate + NH4(+). It functions in the pathway amino-sugar metabolism; N-acetylneuraminate degradation; D-fructose 6-phosphate from N-acetylneuraminate: step 5/5. Catalyzes the reversible isomerization-deamination of glucosamine 6-phosphate (GlcN6P) to form fructose 6-phosphate (Fru6P) and ammonium ion. In Oceanobacillus iheyensis (strain DSM 14371 / CIP 107618 / JCM 11309 / KCTC 3954 / HTE831), this protein is Glucosamine-6-phosphate deaminase.